A 181-amino-acid chain; its full sequence is MGNIFGNLLKSLIGKKEMRILMVGLDAAGKTTILYKLKLGEIVTTIPTIGFNVETVEYKNISFTVWDVGGQDKIRPLWRHYFQNTQGLIFVVDSNDRERVNEAREELMRMLAEDELRDAVLLVFANKQDLPNAMNAAEITDKLGLHSLRHRNWYIQATCATSGDGLYEGLDWLANQLKNKK.

The N-myristoyl glycine moiety is linked to residue Gly2. GTP is bound by residues 24 to 31 (GLDAAGKT), 67 to 71 (DVGGQ), and 126 to 129 (NKQD).

Belongs to the small GTPase superfamily. Arf family. Interacts with PRKCABP. Interacts with PI4KB and NCS1/FREQ at the Golgi complex.

The protein localises to the golgi apparatus. It localises to the cytoplasm. The protein resides in the perinuclear region. Functionally, GTP-binding protein that functions as an allosteric activator of the cholera toxin catalytic subunit, an ADP-ribosyltransferase. Involved in protein trafficking; may modulate vesicle budding and uncoating within the Golgi apparatus. This chain is ADP-ribosylation factor 3 (ARF3), found in Bos taurus (Bovine).